The primary structure comprises 2594 residues: Protein sevenless (2594 aa).

2 disordered regions span residues 1–34 (MFWREDAAQQQQQQQQQQQQQQQQQQPPHPPKRL) and 49–92 (KMST…RVRR). The Extracellular segment spans residues 1 to 2141 (MFWREDAAQQ…FVSPEKRGSL (2141 aa)). Low complexity predominate over residues 9-26 (QQQQQQQQQQQQQQQQQQ). Residues asparagine 77, asparagine 401, asparagine 508, asparagine 532, asparagine 641, asparagine 667, asparagine 778, asparagine 797, asparagine 874, and asparagine 980 are each glycosylated (N-linked (GlcNAc...) asparagine). Fibronectin type-III domains lie at 358-462 (ETTQ…TPME) and 468-560 (APII…SPLE). The Fibronectin type-III 3 domain occupies 838 to 938 (PPAPRELRAL…APLATRTWPL (101 aa)). One copy of the LDL-receptor class B repeat lies at 1024–1066 (GLLYWTDLARDCVQRLDPFSGERELLPIFGARHLALDSAQGHL). Fibronectin type-III domains are found at residues 1227-1317 (LAVP…QLDT) and 1324-1430 (QPRR…VQSV). N-linked (GlcNAc...) asparagine glycans are attached at residues asparagine 1257, asparagine 1344, asparagine 1382, asparagine 1577, asparagine 1587, asparagine 1665, asparagine 1752, asparagine 1776, asparagine 1824, asparagine 1908, asparagine 1966, and asparagine 2088. Fibronectin type-III domains are found at residues 1711–1814 (TAAA…TLHT), 1821–1920 (APRN…SYAP), 1922–2010 (PPLQ…TLGD), and 2014–2132 (APGR…AEPF). Residues 2142–2162 (VLAIIAPAAIVSSCVLALVLV) form a helical membrane-spanning segment. The Cytoplasmic portion of the chain corresponds to 2163–2594 (RKLQKRRHRA…LYANEGISGL (432 aa)). In terms of domain architecture, Protein kinase spans 2224-2495 (LTLLRFLGSG…KRCLSTLQAL (272 aa)). ATP is bound by residues 2230 to 2238 (LGSGAFGEV) and lysine 2257. The active-site Proton acceptor is aspartate 2355. Residue tyrosine 2391 is modified to Phosphotyrosine; by autocatalysis. A disordered region spans residues 2543 to 2568 (TVSTTDADTTGSPTTPTAPTTPTTTT). Low complexity predominate over residues 2545-2568 (STTDADTTGSPTTPTAPTTPTTTT).

Belongs to the protein kinase superfamily. Tyr protein kinase family. Insulin receptor subfamily.

The protein localises to the cell membrane. The catalysed reaction is L-tyrosyl-[protein] + ATP = O-phospho-L-tyrosyl-[protein] + ADP + H(+). Its function is as follows. Receptor for an extracellular signal required to instruct a cell to differentiate into a R7 photoreceptor. The ligand for Sev is the Boss (Bride of Sevenless) protein. In Drosophila virilis (Fruit fly), this protein is Protein sevenless (sev).